Here is a 691-residue protein sequence, read N- to C-terminus: Mediator of RNA polymerase II transcription subunit 17 (691 aa).

Residues 158-185 adopt a coiled-coil conformation; it reads KLESFDAAANKLLQSAQRLEEDIAAETK.

Belongs to the Mediator complex subunit 17 family. As to quaternary structure, component of the Mediator complex.

The protein resides in the nucleus. In terms of biological role, component of the Mediator complex, a coactivator involved in the regulated transcription of nearly all RNA polymerase II-dependent genes. Mediator functions as a bridge to convey information from gene-specific regulatory proteins to the basal RNA polymerase II transcription machinery. Mediator is recruited to promoters by direct interactions with regulatory proteins and serves as a scaffold for the assembly of a functional preinitiation complex with RNA polymerase II and the general transcription factors. The protein is Mediator of RNA polymerase II transcription subunit 17 (SRB4) of Coccidioides immitis (strain RS) (Valley fever fungus).